The chain runs to 212 residues: Cyclin-P4-1 (212 aa).

It belongs to the cyclin family. Cyclin U/P subfamily.

This Oryza sativa subsp. japonica (Rice) protein is Cyclin-P4-1 (CYCP4-1).